A 256-amino-acid polypeptide reads, in one-letter code: 14-3-3-like protein GF14-C (256 aa).

Belongs to the 14-3-3 family. As to quaternary structure, may form a complex with the transcriptional activator VP1 and the bZIP transcription factor EMBP1. In terms of tissue distribution, expressed in seedlings, internodes and panicles.

Its subcellular location is the cytoplasm. The protein resides in the nucleus. Is associated with a DNA binding complex that binds to the G box, a well-characterized cis-acting DNA regulatory element found in plant genes. In Oryza sativa subsp. japonica (Rice), this protein is 14-3-3-like protein GF14-C (GF14C).